A 410-amino-acid polypeptide reads, in one-letter code: MAILIYALACAFGLGSWLAINGLWVELPIIVTTLPEGWELPSYLTVIIQLANLGPLLVTLMHKLCPGRLKESVVIYTILCIGVLACFLLAFFLGRDNCGGWGPAQRSLLHHYFLPGTSGLHLLSHLPALHDAAACPLHHHTEGGDTYVLQTQYLPPNFTTEVFFFFLAVMMCISLAAFWKLNRLPRTFEVSTENLVPDSVSSVCSGLDNPAVRTNSQKHLCEVTSQARPLLTKSGHSMFQLTFIYLMVVWVNGTTNGLLPSVQTYSCMPYGNLAYHLSAALASVANPVACIVAMFFPKRSLVFLGLLCVMGTGFASYNMAMAAMSPCPLLQKSALGEAIIVLSWVFFTGSLSYVKVMVGVILRDESHSALVWCGAAAQIGSLIGSVIMFPLINMYNLFQSGDTCSTKCPL.

Helical transmembrane passes span Ile3–Leu23, Leu40–Leu60, and Val73–Leu93. Asn157 carries N-linked (GlcNAc...) asparagine glycosylation. 6 consecutive transmembrane segments (helical) span residues Phe158–Phe178, Phe239–Leu259, Leu277–Pro297, Leu301–Met321, Ala334–Val354, and Ala369–Phe389.

Belongs to the riboflavin transporter family.

The protein resides in the cell membrane. It carries out the reaction riboflavin(in) = riboflavin(out). Its function is as follows. Plasma membrane transporter mediating the uptake by cells of the water soluble vitamin B2/riboflavin that plays a key role in biochemical oxidation-reduction reactions of the carbohydrate, lipid, and amino acid metabolism. This is Solute carrier family 52, riboflavin transporter, member 3 (slc52a3) from Osmerus mordax (Rainbow smelt).